Consider the following 159-residue polypeptide: Protein-export protein SecB (159 aa).

Belongs to the SecB family. As to quaternary structure, homotetramer, a dimer of dimers. One homotetramer interacts with 1 SecA dimer.

The protein resides in the cytoplasm. One of the proteins required for the normal export of preproteins out of the cell cytoplasm. It is a molecular chaperone that binds to a subset of precursor proteins, maintaining them in a translocation-competent state. It also specifically binds to its receptor SecA. In Bartonella bacilliformis (strain ATCC 35685 / KC583 / Herrer 020/F12,63), this protein is Protein-export protein SecB.